Here is a 68-residue protein sequence, read N- to C-terminus: Large ribosomal subunit protein bL35 (68 aa).

Belongs to the bacterial ribosomal protein bL35 family.

The polypeptide is Large ribosomal subunit protein bL35 (Orientia tsutsugamushi (strain Ikeda) (Rickettsia tsutsugamushi)).